We begin with the raw amino-acid sequence, 158 residues long: 6,7-dimethyl-8-ribityllumazine synthase (158 aa).

5-amino-6-(D-ribitylamino)uracil contacts are provided by residues F24, 58–60 (AFE), and 82–84 (AVI). 87-88 (GT) serves as a coordination point for (2S)-2-hydroxy-3-oxobutyl phosphate. The active-site Proton donor is H90. F115 contacts 5-amino-6-(D-ribitylamino)uracil. R129 provides a ligand contact to (2S)-2-hydroxy-3-oxobutyl phosphate.

Belongs to the DMRL synthase family. In terms of assembly, forms an icosahedral capsid composed of 60 subunits, arranged as a dodecamer of pentamers.

It catalyses the reaction (2S)-2-hydroxy-3-oxobutyl phosphate + 5-amino-6-(D-ribitylamino)uracil = 6,7-dimethyl-8-(1-D-ribityl)lumazine + phosphate + 2 H2O + H(+). It functions in the pathway cofactor biosynthesis; riboflavin biosynthesis; riboflavin from 2-hydroxy-3-oxobutyl phosphate and 5-amino-6-(D-ribitylamino)uracil: step 1/2. Catalyzes the formation of 6,7-dimethyl-8-ribityllumazine by condensation of 5-amino-6-(D-ribitylamino)uracil with 3,4-dihydroxy-2-butanone 4-phosphate. This is the penultimate step in the biosynthesis of riboflavin. This chain is 6,7-dimethyl-8-ribityllumazine synthase, found in Ectopseudomonas mendocina (strain ymp) (Pseudomonas mendocina).